Reading from the N-terminus, the 339-residue chain is Phosphate acyltransferase (339 aa).

The protein belongs to the PlsX family. As to quaternary structure, homodimer. Probably interacts with PlsY.

The protein resides in the cytoplasm. It catalyses the reaction a fatty acyl-[ACP] + phosphate = an acyl phosphate + holo-[ACP]. Its pathway is lipid metabolism; phospholipid metabolism. In terms of biological role, catalyzes the reversible formation of acyl-phosphate (acyl-PO(4)) from acyl-[acyl-carrier-protein] (acyl-ACP). This enzyme utilizes acyl-ACP as fatty acyl donor, but not acyl-CoA. This chain is Phosphate acyltransferase, found in Helicobacter pylori (strain Shi470).